Reading from the N-terminus, the 99-residue chain is Large ribosomal subunit protein uL23 (99 aa).

It belongs to the universal ribosomal protein uL23 family. Part of the 50S ribosomal subunit. Contacts protein L29, and trigger factor when it is bound to the ribosome.

Its function is as follows. One of the early assembly proteins it binds 23S rRNA. One of the proteins that surrounds the polypeptide exit tunnel on the outside of the ribosome. Forms the main docking site for trigger factor binding to the ribosome. This is Large ribosomal subunit protein uL23 from Haemophilus influenzae (strain 86-028NP).